The chain runs to 245 residues: Brasilane terpene glycosides biosynthesis cluster protein D (245 aa).

2 C3H1-type zinc fingers span residues 121–152 and 161–185; these read KELKIICPWWLTDGYSCREHDQGKCPFYHDNV and ICHFWADGGRCTKSQKDCRFAHYPA. Positions 186–245 are disordered; sequence PHRVTAPMPSKKKSKKLRSSVADDASHPDLGKARRHDPRDDEQNDEVWRNQGRARPGQEW. Positions 209-226 are enriched in basic and acidic residues; sequence DASHPDLGKARRHDPRDD.

Part of the gene cluster that mediates the biosynthesis of the brasilane terpene glycosides brasilane D and E. The biosynthesis starts with the activity of the terpene cyclase braA that converts farnesyl pyrophosphate into the sesquiterpene alcohol trichobrasilenol. Subsequently, trichobrasilenol is glycosylated by the O-glycosyltransferase braB putatively using UDP-GlcNAc as sugar donor to yield brasilane A. The latter then undergoes two rounds of oxidation performed by the cytochrome P450 monooxygenase braC. In the first round braC hydroxylates C-12 forming brasilane D, which serves as substrate in the second round to establish the epoxide at the bond between C-5 and C-10 and oxidize the alcohol at C-12 to an aldehyde leading to the final product brasilane E. This Annulohypoxylon truncatum (Hypoxylon truncatum) protein is Brasilane terpene glycosides biosynthesis cluster protein D.